The primary structure comprises 178 residues: Protein GrpE (178 aa).

Belongs to the GrpE family. As to quaternary structure, homodimer.

It is found in the cytoplasm. Participates actively in the response to hyperosmotic and heat shock by preventing the aggregation of stress-denatured proteins, in association with DnaK and GrpE. It is the nucleotide exchange factor for DnaK and may function as a thermosensor. Unfolded proteins bind initially to DnaJ; upon interaction with the DnaJ-bound protein, DnaK hydrolyzes its bound ATP, resulting in the formation of a stable complex. GrpE releases ADP from DnaK; ATP binding to DnaK triggers the release of the substrate protein, thus completing the reaction cycle. Several rounds of ATP-dependent interactions between DnaJ, DnaK and GrpE are required for fully efficient folding. The chain is Protein GrpE from Rickettsia prowazekii (strain Madrid E).